The primary structure comprises 440 residues: O-glycoside alpha-1,2-mannosyltransferase homolog 4 (440 aa).

The Cytoplasmic portion of the chain corresponds to 1-35; that stretch reads MLGWNKHVFFSESRINFRCLLRKKLKKRCPLSARF. Residues 36-56 traverse the membrane as a helical; Signal-anchor for type II membrane protein segment; that stretch reads VLVLLLIVLIFILKMGYKQLI. At 57-440 the chain is on the lumenal side; sequence YKLNHPPLRR…NLIGDGFLDE (384 aa). Glu336 serves as the catalytic Nucleophile.

The protein belongs to the glycosyltransferase 15 family.

It is found in the cytoplasm. The protein resides in the nucleus. Its subcellular location is the golgi apparatus membrane. Probable mannosyltransferase involved in O-glycosylation of cell wall and secreted proteins. Transfers an alpha-D-mannosyl residue from GDP-mannose into lipid-linked oligosaccharide, forming an alpha-(1-&gt;2)-D-mannosyl-D-mannose linkage. This chain is O-glycoside alpha-1,2-mannosyltransferase homolog 4 (omh4), found in Schizosaccharomyces pombe (strain 972 / ATCC 24843) (Fission yeast).